A 949-amino-acid chain; its full sequence is MVKIMPNLPGLYFLQAYPSEEIWRLFVDGRFWSKENGWRGYESREPGCLNAALESLCSIALQVEKSGEEFELSVDLIKRIHKKCGKKVEELQEKNPGELRTDEPVSFGIPAGRASIKGIEEFLSLVFLTEGGAEFGPGKAGPFGPRFDKNYFKNLNPEQIPDLAKQIYFDMCKYGHSNTNHFYLAVMKNVDVYLEKITQSYNKEIKTAETLDEKLKIIVKHIRMYEVLHPFRDANGRTFVNNLLNILLMQQGLPPATFYEPNVFDLYSAEELVVVVKEAIFNTVEIIEQSKRKTPITLYGYHSSLEEQTKFRDMLDSPSYEKIKHMDFSDLNPEKLHLKTQKCLSSLNEQYPLHRGAIYLSDPGEIKLLLSNRNESQINQQIEQGAPPIYVGKTPAHLAVISGNMAMLDELIAKKADLSLQDYDGKTALHYAAECGNMQIMGKILKVVLSQEDAIKVLNIKDNHGKTAFHYAAEFGTPELISALTTTEVIQINEPDNSGSSAITLAYKNHKLKIFDELLNSGADISDELLDAIWARKDKETLGKIIAKNEKILLNKEAFRIAISLGSVSLVKKFLRAGVDIDIPLTKDKATPLMLSINSGNPKLVSYLLKKGANTRLTDTSGNSVLHYVFYSKAENREALANIITEKDKKLINQPNANGNPPLYNAVVVNDLKMATILLEMGARVDFEDRLGNNILHSAMRRCDLPIILDIVKKDSTLLHKRNSERRNPFHQALHEMHTFPSSKETEEIHFMNLSDLLLKEGVDLNKKDIKGKTILDIALSKQYFHLCVKLMKAGAHTNISSPSKFLKNSDANSILERPFKFKNDLKKELDNNPLIAMAQINDLYVQIKNNRIRTPTGYAPKEGVSFFKGKSNDAKAHDEVLSVLKELYDSKLTEMLGNLPGEGLEEIKRSQKFFDGELKLLIKNQDISRKVDKKSIQEAVGTSLKLKW.

The Fido domain maps to 155–289; it reads LNPEQIPDLA…IFNTVEIIEQ (135 aa). ANK repeat units follow at residues 391-420, 424-453, 464-494, 498-527, 554-583, 588-617, 658-687, 691-720, 725-767, and 771-800; these read VGKT…DLSL, DGKT…SQED, HGKT…QINE, SGSS…DISD, LNKE…DIDI, DKAT…NTRL, NGNP…RVDF, LGNN…TLLH, ERRN…DLNK, and KGKT…HTNI.

The protein localises to the secreted. Its subcellular location is the host cytoplasm. It catalyses the reaction [Rab1 protein]-L-serine + CDP-choline = [Rab1 protein]-O-phosphocholine-L-serine + CMP + H(+). In terms of biological role, virulence effector that plays a role in hijacking the host vesicular trafficking by recruiting the small guanosine triphosphatase (GTPase) Rab1 to the cytosolic face of the Legionella-containing vacuole (LCVs). Acts as a phosphocholine transferase by mediating the addition of phosphocholine to Ser residues of host RAB1 (RAB1A, RAB1B or RAB1C) and RAB35, leading to displacement of GDP dissociation inhibitors (GDI). Phosphocholination of target proteins also impairs accessibility to GTPase effector LepB. Can act on both GDP-bound and GTP-bound Rab proteins. In Legionella pneumophila subsp. pneumophila (strain Philadelphia 1 / ATCC 33152 / DSM 7513), this protein is Phosphocholine transferase AnkX (ankX).